The sequence spans 362 residues: Porin Omp2b (362 aa).

The N-terminal stretch at 1 to 22 (MNIKSLLLGSAAALVAASGAQA) is a signal peptide.

It belongs to the alphaproteobacteria porin family. As to quaternary structure, homotrimer.

The protein resides in the cell outer membrane. In terms of biological role, forms passive diffusion pores that allow small molecular weight hydrophilic materials across the outer membrane. The protein is Porin Omp2b (omp2b) of Brucella canis (strain ATCC 23365 / NCTC 10854 / RM-666).